Reading from the N-terminus, the 105-residue chain is Heat shock protein HspQ (105 aa).

This sequence belongs to the HspQ family.

Its subcellular location is the cytoplasm. In terms of biological role, involved in the degradation of certain denaturated proteins, including DnaA, during heat shock stress. The polypeptide is Heat shock protein HspQ (Blochmanniella pennsylvanica (strain BPEN)).